Here is a 100-residue protein sequence, read N- to C-terminus: Putative membrane protein insertion efficiency factor (100 aa).

The protein belongs to the UPF0161 family.

The protein localises to the cell membrane. Functionally, could be involved in insertion of integral membrane proteins into the membrane. The chain is Putative membrane protein insertion efficiency factor from Enterococcus faecalis (strain ATCC 700802 / V583).